A 262-amino-acid chain; its full sequence is MANWYRPNYPEVRSRVLGLPEKVRACLFDLDGVLTDTASLHTKAWKAMFDAYLAERAERTGEKFVPFDPAADYHTYVDGKKREDGVRSFLSSRAIEIPDGSPDDPGAAETVYGLGNRKNDMLHKLLRDDGAQVFDGSRRYLEAVTAAGLGVAVVSSSANTRDVLATTGLDRFVQQRVDGVTLREEHIAGKPAPDSFLRAAELLGVTPDAAAVFEDALSGVAAGRAGNFAVVVGINRTGRAAQAAQLRRHGADVVVTDLAELL.

Asp-29 acts as the Nucleophile in catalysis. Positions 29 and 31 each coordinate Mg(2+). Asp-29 is subject to 4-aspartylphosphate. The active-site Proton donor/acceptor is the Asp-31. Beta-D-glucose 6-phosphate-binding residues include Asp-31, Gly-79, Arg-82, Ser-157, and Asn-159. Asp-215 provides a ligand contact to Mg(2+).

Belongs to the HAD-like hydrolase superfamily. CbbY/CbbZ/Gph/YieH family. Monomer. The cofactor is Mg(2+). Autophosphorylated.

The enzyme catalyses beta-D-glucose 1-phosphate = beta-D-glucose 6-phosphate. In terms of biological role, catalyzes the interconversion of D-glucose 1-phosphate (G1P) and D-glucose 6-phosphate (G6P), forming beta-D-glucose 1,6-(bis)phosphate (beta-G16P) as an intermediate. The protein is Beta-phosphoglucomutase of Mycobacterium bovis (strain ATCC BAA-935 / AF2122/97).